The chain runs to 202 residues: Arenicin-1 (202 aa).

The N-terminal stretch at 1–25 is a signal peptide; that stretch reads MTSTQSVAVCATLILAIFCVNDIHC. A propeptide spanning residues 26–181 is cleaved from the precursor; the sequence is DPIAEARAAA…SGDNNEPEKR (156 aa). A BRICHOS domain is found at 73-168; that stretch reads GDGVEGSVMV…ACQGKSVYWL (96 aa). 2 cysteine pairs are disulfide-bonded: C100–C160 and C184–C201.

Functionally, has antimicrobial activity against the Gram-negative bacteria E.coli and P.mirabilis, the Gram-positive bacterium L.monocytogenes and the yeast C.albicans. This is Arenicin-1 from Arenicola marina (Lugworm).